The primary structure comprises 60 residues: Histidine-rich metal-binding polypeptide (60 aa).

The disordered stretch occupies residues 1–60 (MAHHEEQHGGHHHHHHHTHHHHYHGGEHHHHHHSSHHEEGCCSTSDSHHQEEGCCHGHHE). The span at 10–35 (GHHHHHHHTHHHHYHGGEHHHHHHSS) shows a compositional bias: basic residues. The span at 36–60 (HHEEGCCSTSDSHHQEEGCCHGHHE) shows a compositional bias: basic and acidic residues. 2 tandem repeats follow at residues 38–42 (EEGCC) and 51–55 (EEGCC). Residues 38 to 55 (EEGCCSTSDSHHQEEGCC) are 2 X 5 AA repeats of E-E-G-C-C.

Strongly binds nickel and zinc. Binds other metals less strongly: cobalt &gt; copper &gt; cadmium &gt; manganese. May act to increase, or at least to preserve, urease activity. Exact function is still unknown. The chain is Histidine-rich metal-binding polypeptide (hpn) from Helicobacter pylori (strain J99 / ATCC 700824) (Campylobacter pylori J99).